A 242-amino-acid chain; its full sequence is Probable 2-phosphosulfolactate phosphatase (242 aa).

Belongs to the ComB family. It depends on Mg(2+) as a cofactor.

It carries out the reaction (2R)-O-phospho-3-sulfolactate + H2O = (2R)-3-sulfolactate + phosphate. In Parasynechococcus marenigrum (strain WH8102), this protein is Probable 2-phosphosulfolactate phosphatase.